The primary structure comprises 303 residues: Esterase (303 aa).

Residues 79-81 (HGG) carry the Involved in the stabilization of the negatively charged intermediate by the formation of the oxyanion hole motif. Residues Ser149 and Glu244 contribute to the active site.

It belongs to the 'GDXG' lipolytic enzyme family.

The protein localises to the secreted. This is Esterase (est) from Acinetobacter venetianus (strain ATCC 31012 / DSM 23050 / BCRC 14357 / CCUG 45561 / CIP 110063 / KCTC 2702 / LMG 19082 / RAG-1).